The following is an 87-amino-acid chain: UPF0250 protein ETA_23570 (87 aa).

Belongs to the UPF0250 family.

The sequence is that of UPF0250 protein ETA_23570 from Erwinia tasmaniensis (strain DSM 17950 / CFBP 7177 / CIP 109463 / NCPPB 4357 / Et1/99).